The sequence spans 63 residues: Beta-defensin 6 (63 aa).

The signal sequence occupies residues 1–22; sequence MKIHYLLFAFILVMLSPLAAFS. Residue Gln-23 is modified to Pyrrolidone carboxylic acid. Intrachain disulfides connect Cys-31/Cys-59, Cys-38/Cys-52, and Cys-42/Cys-60.

It belongs to the beta-defensin family. Predominantly expressed in skeletal muscle, also expressed in esophagus, tongue, and trachea. Also expressed in lung when induced by lipopolysaccharide.

Its subcellular location is the secreted. Has potent antibacterial activity against E.coli (ATCC 25922). The chain is Beta-defensin 6 (Defb6) from Mus musculus (Mouse).